We begin with the raw amino-acid sequence, 58 residues long: Small ribosomal subunit protein bS21 (58 aa).

This sequence belongs to the bacterial ribosomal protein bS21 family.

The protein is Small ribosomal subunit protein bS21 of Streptococcus pyogenes serotype M49 (strain NZ131).